Reading from the N-terminus, the 85-residue chain is Alpha-toxin Ac2 (85 aa).

A signal peptide spans 1-19; it reads MNYLVMISLALLFMTGVES. One can recognise an LCN-type CS-alpha/beta domain in the interval 21 to 83; it reads KDGYIVDDRN…VRTKGPGRCK (63 aa). Intrachain disulfides connect Cys-31-Cys-82, Cys-35-Cys-55, Cys-41-Cys-65, and Cys-45-Cys-67. Lys-83 is subject to Lysine amide.

It belongs to the long (4 C-C) scorpion toxin superfamily. Sodium channel inhibitor family. Alpha subfamily. Expressed by the venom gland.

The protein resides in the secreted. Its function is as follows. Alpha toxins bind voltage-independently at site-3 of sodium channels (Nav) and inhibit the inactivation of the activated channels, thereby blocking neuronal transmission. This Androctonus crassicauda (Arabian fat-tailed scorpion) protein is Alpha-toxin Ac2.